The chain runs to 451 residues: Probable D-serine dehydratase (451 aa).

Residue Lys-119 is modified to N6-(pyridoxal phosphate)lysine.

This sequence belongs to the serine/threonine dehydratase family. DsdA subfamily. Pyridoxal 5'-phosphate serves as cofactor.

The enzyme catalyses D-serine = pyruvate + NH4(+). The sequence is that of Probable D-serine dehydratase from Acidovorax sp. (strain JS42).